A 184-amino-acid chain; its full sequence is MSAWFIQKAVSVLSRGGVLAYPTEAVWGLGCDPSCEDAVNRILQLKRRPWRKGLILVSGQIEHFSQLLDRLPQQQKDQILATWPGPVTWVVPDPGVYAPLVRGAHDAIAIRVTAHPLVVELTKAFGGPIVSTSANPATREPARTLFDCRRYFKSGVDHYLPGKLSGLSKPSQIRDAATGAILRQ.

One can recognise a YrdC-like domain in the interval 3–184 (AWFIQKAVSV…DAATGAILRQ (182 aa)).

It belongs to the SUA5 family. TsaC subfamily.

It is found in the cytoplasm. It catalyses the reaction L-threonine + hydrogencarbonate + ATP = L-threonylcarbamoyladenylate + diphosphate + H2O. Functionally, required for the formation of a threonylcarbamoyl group on adenosine at position 37 (t(6)A37) in tRNAs that read codons beginning with adenine. Catalyzes the conversion of L-threonine, HCO(3)(-)/CO(2) and ATP to give threonylcarbamoyl-AMP (TC-AMP) as the acyladenylate intermediate, with the release of diphosphate. The protein is Threonylcarbamoyl-AMP synthase of Hahella chejuensis (strain KCTC 2396).